Here is a 59-residue protein sequence, read N- to C-terminus: Preprotein translocase subunit SecG (59 aa).

Residues 1–33 (MARRESSGGSGGLMSSAGLMRYFEAEESAIKID) lie on the Cytoplasmic side of the membrane. Residues 34-55 (PKTVIIAAVASGAFIWILNFTY) traverse the membrane as a helical segment. The Extracellular portion of the chain corresponds to 56–59 (GRFW).

This sequence belongs to the SEC61-beta family. As to quaternary structure, component of the protein translocase complex. Heterotrimer consisting of alpha (SecY), beta (SecG) and gamma (SecE) subunits. Can form oligomers of the heterotrimer.

It localises to the cell membrane. Functionally, involved in protein export. The function of the beta subunit is unknown, but it may be involved in stabilization of the trimeric complex. The protein is Preprotein translocase subunit SecG of Methanocella arvoryzae (strain DSM 22066 / NBRC 105507 / MRE50).